Reading from the N-terminus, the 208-residue chain is Methylthioribulose-1-phosphate dehydratase (208 aa).

2 residues coordinate Zn(2+): His-98 and His-100.

It belongs to the aldolase class II family. MtnB subfamily. It depends on Zn(2+) as a cofactor.

The catalysed reaction is 5-(methylsulfanyl)-D-ribulose 1-phosphate = 5-methylsulfanyl-2,3-dioxopentyl phosphate + H2O. It functions in the pathway amino-acid biosynthesis; L-methionine biosynthesis via salvage pathway; L-methionine from S-methyl-5-thio-alpha-D-ribose 1-phosphate: step 2/6. Catalyzes the dehydration of methylthioribulose-1-phosphate (MTRu-1-P) into 2,3-diketo-5-methylthiopentyl-1-phosphate (DK-MTP-1-P). The polypeptide is Methylthioribulose-1-phosphate dehydratase (Marinobacter nauticus (strain ATCC 700491 / DSM 11845 / VT8) (Marinobacter aquaeolei)).